The primary structure comprises 223 residues: MNDYSQLEKRLNYTFKDKQLIIEALTHKSYKKPYNNERLEFLGDAVLDLIVGEYLFKKFPKSDEGILSKIRASLVNESGFTLLARKIDLGSYIYLSLAEENNNGRDKPSLLSNAFEAIIGAVYLEAGLDTAKEISIKLLEECHPKIDLQSLSKDYKTALQELTQATHAVTPGYEMLGSSGPDHKKEFEIAVTLDNKTIATAKGKSKKDAQQKAAKIALEALKK.

The RNase III domain occupies 4-127; sequence YSQLEKRLNY…IIGAVYLEAG (124 aa). E40 serves as a coordination point for Mg(2+). Residue D44 is part of the active site. Residues N113 and E116 each coordinate Mg(2+). The active site involves E116. The region spanning 154 to 223 is the DRBM domain; the sequence is DYKTALQELT…AKIALEALKK (70 aa).

This sequence belongs to the ribonuclease III family. In terms of assembly, homodimer. Mg(2+) is required as a cofactor.

The protein localises to the cytoplasm. It catalyses the reaction Endonucleolytic cleavage to 5'-phosphomonoester.. Digests double-stranded RNA. Involved in the processing of primary rRNA transcript to yield the immediate precursors to the large and small rRNAs (23S and 16S). Processes some mRNAs, and tRNAs when they are encoded in the rRNA operon. Processes pre-crRNA and tracrRNA of type II CRISPR loci if present in the organism. The protein is Ribonuclease 3 of Sulfurovum sp. (strain NBC37-1).